Here is a 142-residue protein sequence, read N- to C-terminus: ATP synthase epsilon chain (142 aa).

Belongs to the ATPase epsilon chain family. As to quaternary structure, F-type ATPases have 2 components, CF(1) - the catalytic core - and CF(0) - the membrane proton channel. CF(1) has five subunits: alpha(3), beta(3), gamma(1), delta(1), epsilon(1). CF(0) has three main subunits: a, b and c.

It is found in the cell inner membrane. In terms of biological role, produces ATP from ADP in the presence of a proton gradient across the membrane. This Koribacter versatilis (strain Ellin345) protein is ATP synthase epsilon chain.